A 360-amino-acid chain; its full sequence is Phospho-N-acetylmuramoyl-pentapeptide-transferase (360 aa).

Transmembrane regions (helical) follow at residues 26–46 (AILG…ILIK), 73–93 (TMGG…WGDL), 97–117 (YVLV…IDDY), 135–155 (ALQS…STMV), 168–188 (IMPQ…VGAS), 199–219 (GLAI…AYLS), 236–256 (AGEL…FLWF), 263–283 (VFMG…IAIL), 288–308 (ILLV…ILQV), and 338–358 (VIVR…ATLK).

This sequence belongs to the glycosyltransferase 4 family. MraY subfamily. The cofactor is Mg(2+).

Its subcellular location is the cell inner membrane. The enzyme catalyses UDP-N-acetyl-alpha-D-muramoyl-L-alanyl-gamma-D-glutamyl-meso-2,6-diaminopimeloyl-D-alanyl-D-alanine + di-trans,octa-cis-undecaprenyl phosphate = di-trans,octa-cis-undecaprenyl diphospho-N-acetyl-alpha-D-muramoyl-L-alanyl-D-glutamyl-meso-2,6-diaminopimeloyl-D-alanyl-D-alanine + UMP. It participates in cell wall biogenesis; peptidoglycan biosynthesis. In terms of biological role, catalyzes the initial step of the lipid cycle reactions in the biosynthesis of the cell wall peptidoglycan: transfers peptidoglycan precursor phospho-MurNAc-pentapeptide from UDP-MurNAc-pentapeptide onto the lipid carrier undecaprenyl phosphate, yielding undecaprenyl-pyrophosphoryl-MurNAc-pentapeptide, known as lipid I. This Shewanella frigidimarina (strain NCIMB 400) protein is Phospho-N-acetylmuramoyl-pentapeptide-transferase.